The sequence spans 489 residues: GTPase Der (489 aa).

2 EngA-type G domains span residues 3-166 (PVVA…FDDV) and 201-374 (IKLA…DSST). GTP contacts are provided by residues 9–16 (GRPNVGKS), 56–60 (DTGGI), 118–121 (NKTD), 207–214 (GRPNVGKS), 254–258 (DTAGV), and 319–322 (NKWD). The 85-residue stretch at 375–459 (KRISTSILTR…PIRIEFREGT (85 aa)) folds into the KH-like domain.

The protein belongs to the TRAFAC class TrmE-Era-EngA-EngB-Septin-like GTPase superfamily. EngA (Der) GTPase family. In terms of assembly, associates with the 50S ribosomal subunit.

In terms of biological role, GTPase that plays an essential role in the late steps of ribosome biogenesis. In Psychromonas ingrahamii (strain DSM 17664 / CCUG 51855 / 37), this protein is GTPase Der.